The primary structure comprises 304 residues: GTPase Era (304 aa).

An Era-type G domain is found at 11 to 179 (YCGFIAIVGR…QKIVRKSLRE (169 aa)). Positions 19-26 (GRPNVGKS) are G1. Residue 19-26 (GRPNVGKS) coordinates GTP. The tract at residues 45 to 49 (QTTRH) is G2. The segment at 66 to 69 (DTPG) is G3. Residues 66 to 70 (DTPGL) and 128 to 131 (NKVD) each bind GTP. Residues 128–131 (NKVD) form a G4 region. Residues 158–160 (ISA) form a G5 region. The region spanning 210–287 (TGEELPYSVT…HLELWVKVKA (78 aa)) is the KH type-2 domain.

Belongs to the TRAFAC class TrmE-Era-EngA-EngB-Septin-like GTPase superfamily. Era GTPase family. Monomer.

The protein resides in the cytoplasm. The protein localises to the cell inner membrane. Its function is as follows. An essential GTPase that binds both GDP and GTP, with rapid nucleotide exchange. Plays a role in 16S rRNA processing and 30S ribosomal subunit biogenesis and possibly also in cell cycle regulation and energy metabolism. In Actinobacillus pleuropneumoniae serotype 5b (strain L20), this protein is GTPase Era.